A 403-amino-acid polypeptide reads, in one-letter code: uncharacterized protein (403 aa).

12 helical membrane-spanning segments follow: residues 25–47 (IAFF…ILFL), 62–81 (SLSA…GPLS), 88–110 (VVMS…MNSW), 114–136 (IFMR…TYLS), 143–165 (VLSF…GRFL), 175–197 (WNIA…VYLL), 229–251 (LFFM…GYRL), 256–278 (FFLG…YSSP), 290–307 (GVIL…VLIT), 311–330 (IVLL…FAAH), 350–372 (SIYL…IFWI), and 376–398 (WLGI…IRLL).

Belongs to the major facilitator superfamily.

The protein localises to the cell membrane. This is an uncharacterized protein from Buchnera aphidicola subsp. Baizongia pistaciae (strain Bp).